We begin with the raw amino-acid sequence, 186 residues long: Photosystem I assembly protein Ycf4 (186 aa).

2 helical membrane passes run 22–42 (FCWA…GTSS) and 57–77 (IIFF…LFIS).

Belongs to the Ycf4 family.

It is found in the plastid. The protein localises to the chloroplast thylakoid membrane. Seems to be required for the assembly of the photosystem I complex. The sequence is that of Photosystem I assembly protein Ycf4 from Dioscorea elephantipes (Elephant's foot yam).